Here is a 289-residue protein sequence, read N- to C-terminus: N-acetylmuramoyl-L-alanine amidase AmiA (289 aa).

Residues 1–34 (MSTFKPLKTLTSRRQVLKAGLAALTLSGMSQAIA) constitute a signal peptide (tat-type signal). The segment at 39-63 (LKTSNGHSKPKAKKSGGKRVVVLDP) is disordered. Over residues 46–55 (SKPKAKKSGG) the composition is skewed to basic residues. The MurNAc-LAA domain maps to 59 to 273 (VVLDPGHGGI…IATAIAEGVI (215 aa)).

The protein belongs to the N-acetylmuramoyl-L-alanine amidase 3 family. Exported by the Tat system. The position of the signal peptide cleavage has not been experimentally proven. Can also be exported by the Sec system.

Its subcellular location is the periplasm. The catalysed reaction is Hydrolyzes the link between N-acetylmuramoyl residues and L-amino acid residues in certain cell-wall glycopeptides.. In terms of biological role, cell-wall hydrolase involved in septum cleavage during cell division. Can also act as powerful autolysin in the presence of murein synthesis inhibitors. The polypeptide is N-acetylmuramoyl-L-alanine amidase AmiA (amiA) (Escherichia coli (strain K12)).